The sequence spans 391 residues: MIITSLLDTDLYKFSMMQVVLHHFPAAQVEYRYKCRTPGVNLRPYLDEIRAEVHALCQLRFTEEELQYLGSLRFIKSDFVDFLGLFHLPERCISIGEGEQPGEIAITVAGPWLHTILFEIPVLAIVNEVYFRNTRRHPDWDEGRQRLQSKMHLVLDDPALADFRVAEYGTRRRFSKLWHEEIVSTMKAQMGAHFAGTSNVLLAMRHNVLPLGTMGHEYLQACQALGPRLRDSQVFALEVWAKEYRGDLGIALSDVYGMDAFLRDFDMYFCKLFDGARHDSGDPFVWGERLLEHYRNNRVDPRAKTLVFSDSLTFPRAIELARQFAGRCKVSFGIGTNLTNDLGHEPLQIVMKMVRCNGQPVAKVSDAPEKTMCDDPAYLAYLRQVFQLPPA.

The residue at position 216 (H216) is a Phosphohistidine; by autocatalysis.

It belongs to the NAPRTase family. Post-translationally, transiently phosphorylated on a His residue during the reaction cycle. Phosphorylation strongly increases the affinity for substrates and increases the rate of nicotinate D-ribonucleotide production. Dephosphorylation regenerates the low-affinity form of the enzyme, leading to product release.

The catalysed reaction is nicotinate + 5-phospho-alpha-D-ribose 1-diphosphate + ATP + H2O = nicotinate beta-D-ribonucleotide + ADP + phosphate + diphosphate. It functions in the pathway cofactor biosynthesis; NAD(+) biosynthesis; nicotinate D-ribonucleotide from nicotinate: step 1/1. In terms of biological role, catalyzes the synthesis of beta-nicotinate D-ribonucleotide from nicotinate and 5-phospho-D-ribose 1-phosphate at the expense of ATP. The sequence is that of Nicotinate phosphoribosyltransferase from Bordetella petrii (strain ATCC BAA-461 / DSM 12804 / CCUG 43448).